A 386-amino-acid polypeptide reads, in one-letter code: MNLHEYQSKQIFAQYDLPVSKGYPCETVEQALKAIEKLGGDQWVAKCQVYAGGRGKAGGVKVVSSEAEVRSFFERFLGKRLVTLQTDAQGQPVNTIYLEACAAVKKELYVGMVIDRANRRIVFMASTEGGVNIEEVAEKTPHLLHKVAIDPFMGAQPFQGRELACKLGLTGKQIHQFAHIFCRLSKMFSEKDLSLVEINPLVILQNDDLHCLDAKIVVDGNALYRHADLKSLQDPSQEDPREAEAEALGLNYVALDGNIGCMVNGAGLAMGTMDIIKLQGGLPANFLDVGGSATKERVAGAFKIILSDTNVKAILVNIFGGIVRCDLIAEGIVAAVNEVGVTVPVVVRLEGNNAERGREILAQSGLNIIAAESLKDAAVQAVNAAK.

Residues Lys-46, 53–55 (GRG), Glu-99, Ala-102, and Glu-107 contribute to the ATP site. Asn-199 and Asp-213 together coordinate Mg(2+). Substrate is bound by residues Asn-264 and 321-323 (GIV).

The protein belongs to the succinate/malate CoA ligase beta subunit family. In terms of assembly, heterotetramer of two alpha and two beta subunits. It depends on Mg(2+) as a cofactor.

The enzyme catalyses succinate + ATP + CoA = succinyl-CoA + ADP + phosphate. It carries out the reaction GTP + succinate + CoA = succinyl-CoA + GDP + phosphate. It functions in the pathway carbohydrate metabolism; tricarboxylic acid cycle; succinate from succinyl-CoA (ligase route): step 1/1. Succinyl-CoA synthetase functions in the citric acid cycle (TCA), coupling the hydrolysis of succinyl-CoA to the synthesis of either ATP or GTP and thus represents the only step of substrate-level phosphorylation in the TCA. The beta subunit provides nucleotide specificity of the enzyme and binds the substrate succinate, while the binding sites for coenzyme A and phosphate are found in the alpha subunit. This Actinobacillus succinogenes (strain ATCC 55618 / DSM 22257 / CCUG 43843 / 130Z) protein is Succinate--CoA ligase [ADP-forming] subunit beta.